The chain runs to 770 residues: Capsid protein (770 aa).

Residues 647-656 (MQQQPTTTDI) show a composition bias toward polar residues. Disordered stretches follow at residues 647–678 (MQQQ…QEGE) and 697–717 (WEDS…TQTV). The span at 666–678 (RDTEVYHSSQEGE) shows a compositional bias: basic and acidic residues. Low complexity predominate over residues 703–717 (EESGSQSSEEETQTV).

It belongs to the anelloviridae capsid protein family.

It localises to the virion. Self assemble to form an icosahedral capsid. This is Capsid protein from Torque teno virus (isolate Human/Japan/TRM1/1999) (TTV).